A 440-amino-acid chain; its full sequence is tRNA modification GTPase MnmE (440 aa).

Arg-23, Glu-80, and Lys-120 together coordinate (6S)-5-formyl-5,6,7,8-tetrahydrofolate. Positions 217 to 366 (GLKIVIAGEP…LLAMLQAHLP (150 aa)) constitute a TrmE-type G domain. Asn-227 serves as a coordination point for K(+). GTP contacts are provided by residues 227-232 (NAGKSS), 246-252 (TEIAGTT), and 271-274 (DTAG). Mg(2+) is bound at residue Ser-231. 3 residues coordinate K(+): Thr-246, Ile-248, and Thr-251. Residue Thr-252 coordinates Mg(2+). Position 440 (Lys-440) interacts with (6S)-5-formyl-5,6,7,8-tetrahydrofolate.

This sequence belongs to the TRAFAC class TrmE-Era-EngA-EngB-Septin-like GTPase superfamily. TrmE GTPase family. In terms of assembly, homodimer. Heterotetramer of two MnmE and two MnmG subunits. Requires K(+) as cofactor.

It is found in the cytoplasm. Its function is as follows. Exhibits a very high intrinsic GTPase hydrolysis rate. Involved in the addition of a carboxymethylaminomethyl (cmnm) group at the wobble position (U34) of certain tRNAs, forming tRNA-cmnm(5)s(2)U34. This is tRNA modification GTPase MnmE from Sinorhizobium medicae (strain WSM419) (Ensifer medicae).